The primary structure comprises 41 residues: Large ribosomal subunit protein bL36 (41 aa).

This sequence belongs to the bacterial ribosomal protein bL36 family.

In Xylella fastidiosa (strain 9a5c), this protein is Large ribosomal subunit protein bL36.